A 77-amino-acid chain; its full sequence is Large ribosomal subunit protein bL28 (77 aa).

The protein belongs to the bacterial ribosomal protein bL28 family.

In Laribacter hongkongensis (strain HLHK9), this protein is Large ribosomal subunit protein bL28.